The following is a 149-amino-acid chain: MVDWEKVNSVWSAVESDLTAIGQNILLRLFEQYPESQNHFPKFKNKSLGELKDTADIKAQADTVLSALGNIVKKKGSHSQPVKALAATHITTHKIPPHYFTKITTIAVDVLSEMYPSEMNAQVQAAFSGAFKIICSDIEKEYKAANFQG.

Position 2 is an N-acetylvaline (Val2). The Globin domain maps to 2 to 143 (VDWEKVNSVW…ICSDIEKEYK (142 aa)). Residue His89 participates in heme b binding.

This sequence belongs to the globin family. Monomeric.

The protein localises to the cytoplasm. It localises to the sarcoplasm. It carries out the reaction Fe(III)-heme b-[protein] + nitric oxide + H2O = Fe(II)-heme b-[protein] + nitrite + 2 H(+). The catalysed reaction is H2O2 + AH2 = A + 2 H2O. Monomeric heme protein which primary function is to store oxygen and facilitate its diffusion within muscle tissues. Reversibly binds oxygen through a pentacoordinated heme iron and enables its timely and efficient release as needed during periods of heightened demand. Depending on the oxidative conditions of tissues and cells, and in addition to its ability to bind oxygen, it also has a nitrite reductase activity whereby it regulates the production of bioactive nitric oxide. Under stress conditions, like hypoxia and anoxia, it also protects cells against reactive oxygen species thanks to its pseudoperoxidase activity. The polypeptide is Myoglobin (mb) (Mustelus antarcticus (Gummy shark)).